Here is a 302-residue protein sequence, read N- to C-terminus: B3 domain-containing protein At3g17010 (302 aa).

Positions 21-116 (FFKIFQRADL…VFHVNIYEQN (96 aa)) form a DNA-binding region, TF-B3 1. Positions 123-192 (PRKFQTMGPS…KVKKKSKSKS (70 aa)) are disordered. Residues 135–174 (IKKEEGENSLIDVKKEEESDESPGRAEFLVRKKKTEDSKS) are compositionally biased toward basic and acidic residues. Basic residues predominate over residues 175 to 192 (SKKKMTRNKVKKKSKSKS). A DNA-binding region (TF-B3 2) is located at residues 199 to 292 (VPEFKITIRK…EFVLLTSKKN (94 aa)).

The protein resides in the nucleus. This chain is B3 domain-containing protein At3g17010, found in Arabidopsis thaliana (Mouse-ear cress).